Here is a 473-residue protein sequence, read N- to C-terminus: Protein TED1 (473 aa).

Residues Met-1–Lys-8 lie on the Cytoplasmic side of the membrane. Residues Phe-9–Ser-29 traverse the membrane as a helical segment. Residues Phe-30 to His-451 lie on the Lumenal side of the membrane. 5 N-linked (GlcNAc...) asparagine glycosylation sites follow: Asn-38, Asn-147, Asn-229, Asn-266, and Asn-307. Residues Val-452–Phe-472 form a helical membrane-spanning segment. A topological domain (cytoplasmic) is located at residue Val-473.

In terms of processing, N-glycosylated.

It is found in the endoplasmic reticulum membrane. Its function is as follows. Acts together with EMP24 and ERV25 in cargo exit from the endoplasmic reticulum. The polypeptide is Protein TED1 (TED1) (Saccharomyces cerevisiae (strain ATCC 204508 / S288c) (Baker's yeast)).